We begin with the raw amino-acid sequence, 164 residues long: Pyruvoyl-dependent arginine decarboxylase (164 aa).

Serine 52 carries the pyruvic acid (Ser) modification.

The protein belongs to the PdaD family. The cofactor is pyruvate.

It carries out the reaction L-arginine + H(+) = agmatine + CO2. The chain is Pyruvoyl-dependent arginine decarboxylase from Methanococcus maripaludis (strain C6 / ATCC BAA-1332).